The following is a 462-amino-acid chain: Envelope glycoprotein C (462 aa).

Residues 1 to 23 form the signal peptide; sequence MAPRGSGRLEAVVFAVMVLFCSG. Topologically, residues 24–433 are virion surface; that stretch reads TSTATTAAAP…NMPLRQGRPM (410 aa). A compositionally biased stretch (low complexity) spans 29–38; that stretch reads TAAAPASSPG. Positions 29–57 are disordered; it reads TAAAPASSPGIQTSSPAPGTGSTRLPGTR. The span at 39-57 shows a compositional bias: polar residues; sequence IQTSSPAPGTGSTRLPGTR. N-linked (GlcNAc...) asparagine; by host glycans are attached at residues asparagine 66, asparagine 94, asparagine 136, asparagine 173, asparagine 249, and asparagine 417. A helical transmembrane segment spans residues 434-454; sequence LICLAVVMGLFVLGSFLAVVI. Topologically, residues 455-462 are cytoplasmic; sequence SACLWGSG.

The protein belongs to the herpesviridae glycoprotein C family.

It is found in the virion membrane. This is Envelope glycoprotein C (gC) from Psittacid herpesvirus 1 (isolate Amazon parrot/-/97-0001/1997) (PsHV-1).